Reading from the N-terminus, the 541-residue chain is T-complex protein 1 subunit epsilon (541 aa).

Residue Ala-2 is modified to N-acetylalanine. Lys-20 is covalently cross-linked (Glycyl lysine isopeptide (Lys-Gly) (interchain with G-Cter in SUMO2)). Ser-26 is modified (phosphoserine). Residue Gly-53 participates in ADP binding. ATP is bound at residue Gly-53. Residue Asp-104 coordinates Mg(2+). ADP-binding residues include Gly-105, Thr-106, Thr-107, and Ser-175. ATP is bound by residues Thr-106 and Thr-107. Glycyl lysine isopeptide (Lys-Gly) (interchain with G-Cter in SUMO2) cross-links involve residues Lys-210, Lys-214, Lys-265, Lys-275, and Lys-279. The residue at position 346 (Ser-346) is a Phosphoserine. Residue Lys-392 forms a Glycyl lysine isopeptide (Lys-Gly) (interchain with G-Cter in SUMO2) linkage. The ADP site is built by Gly-422, Asp-492, Glu-508, and Lys-513. Residue Gly-422 coordinates ATP. A Phosphoserine modification is found at Ser-539.

It belongs to the TCP-1 chaperonin family. As to quaternary structure, component of the chaperonin-containing T-complex (TRiC), a hexadecamer composed of two identical back-to-back stacked rings enclosing a protein folding chamber. Each ring is made up of eight different subunits: TCP1/CCT1, CCT2, CCT3, CCT4, CCT5, CCT6A/CCT6, CCT7, CCT8. Interacts with PACRG. Interacts with DNAAF4. Interacts with DLEC1. Interacts with SPMAP2. Post-translationally, ubiquitinated by the DCX(DCAF12) complex specifically recognizes the diglutamate (Glu-Glu) at the C-terminus, leading to its degradation.

The protein localises to the cytoplasm. The protein resides in the cytoskeleton. Its subcellular location is the microtubule organizing center. It localises to the centrosome. It carries out the reaction ATP + H2O = ADP + phosphate + H(+). Its function is as follows. Component of the chaperonin-containing T-complex (TRiC), a molecular chaperone complex that assists the folding of actin, tubulin and other proteins upon ATP hydrolysis. The TRiC complex mediates the folding of WRAP53/TCAB1, thereby regulating telomere maintenance. As part of the TRiC complex may play a role in the assembly of BBSome, a complex involved in ciliogenesis regulating transports vesicles to the cilia. The sequence is that of T-complex protein 1 subunit epsilon (Cct5) from Rattus norvegicus (Rat).